The sequence spans 408 residues: FAD-dependent monooxygenase nscC (408 aa).

An N-terminal signal peptide occupies residues 1-20 (MAPPLPILIIGAGISGLTTA). Residues E34 and A45 each coordinate FAD. N91 and N103 each carry an N-linked (GlcNAc...) asparagine glycan. R119 contacts FAD. N-linked (GlcNAc...) asparagine glycans are attached at residues N170 and N231. FAD contacts are provided by D328 and G341.

It belongs to the paxM FAD-dependent monooxygenase family. The cofactor is FAD.

The protein operates within secondary metabolite biosynthesis. Its function is as follows. FAD-dependent monooxygenase; part of the gene cluster that mediates the biosynthesis of neosartoricin, a prenylated anthracenone that exhibits T-cell antiproliferative activity, suggestive of a physiological role as an immunosuppressive agent. The non-reducing polyketide synthase nscA probably synthesizes and cyclizes the decaketide backbone. The hydrolase nscB then mediates the product release through hydrolysis followed by spontaneous decarboxylation. The prenyltransferase nscD catalyzes the addition of the dimethylallyl group to the aromatic C5. The FAD-dependent monooxygenase nscC is then responsible for the stereospecific hydroxylation at C2. There is no gene encoding O-acetyltransferase in the nsc gene cluster; thus, the last step of 2-O-acetylation leading to neosartoricin may be catalyzed by an unidentified O-acetyltransferase. The sequence is that of FAD-dependent monooxygenase nscC from Neosartorya fischeri (strain ATCC 1020 / DSM 3700 / CBS 544.65 / FGSC A1164 / JCM 1740 / NRRL 181 / WB 181) (Aspergillus fischerianus).